A 325-amino-acid polypeptide reads, in one-letter code: Elongation factor P--(R)-beta-lysine ligase (325 aa).

76–78 (SPE) is a binding site for substrate. ATP-binding positions include 100 to 102 (RNE) and asparagine 109. Tyrosine 118 is a binding site for substrate. Position 244 to 245 (244 to 245 (EL)) interacts with ATP. Residue glutamate 251 coordinates substrate. Glycine 300 contributes to the ATP binding site.

The protein belongs to the class-II aminoacyl-tRNA synthetase family. EpmA subfamily. Homodimer.

It carries out the reaction D-beta-lysine + L-lysyl-[protein] + ATP = N(6)-((3R)-3,6-diaminohexanoyl)-L-lysyl-[protein] + AMP + diphosphate + H(+). In terms of biological role, with EpmB is involved in the beta-lysylation step of the post-translational modification of translation elongation factor P (EF-P). Catalyzes the ATP-dependent activation of (R)-beta-lysine produced by EpmB, forming a lysyl-adenylate, from which the beta-lysyl moiety is then transferred to the epsilon-amino group of a conserved specific lysine residue in EF-P. This chain is Elongation factor P--(R)-beta-lysine ligase, found in Enterobacter sp. (strain 638).